Here is a 350-residue protein sequence, read N- to C-terminus: tRNA uridine(34) hydroxylase (350 aa).

One can recognise a Rhodanese domain in the interval 146-240 (DDPDALFIDM…YARKAREQGL (95 aa)). Cys200 serves as the catalytic Cysteine persulfide intermediate.

This sequence belongs to the TrhO family.

It catalyses the reaction uridine(34) in tRNA + AH2 + O2 = 5-hydroxyuridine(34) in tRNA + A + H2O. Its function is as follows. Catalyzes oxygen-dependent 5-hydroxyuridine (ho5U) modification at position 34 in tRNAs, the first step in 5-carboxymethoxyuridine (cmo5U) biosynthesis. May be part of an alternate pathway, which is able to bypass cmo5U biogenesis in a subset of tRNAs under aerobic conditions. This chain is tRNA uridine(34) hydroxylase, found in Escherichia coli (strain SE11).